The following is a 141-amino-acid chain: Cystatin-S (141 aa).

Positions M1–A20 are cleaved as a signal peptide. Phosphoserine is present on residues S21 and S23. A Secondary area of contact motif is present at residues Q76 to G80. 2 disulfide bridges follow: C94–C104 and C118–C138.

It belongs to the cystatin family. In terms of processing, phosphorylated at both its N- and C-terminal regions. Expressed in submandibular and sublingual saliva but not in parotid saliva (at protein level). Expressed in saliva, tears, urine and seminal fluid.

The protein localises to the secreted. This protein strongly inhibits papain and ficin, partially inhibits stem bromelain and bovine cathepsin C, but does not inhibit porcine cathepsin B or clostripain. Papain is inhibited non-competitively. This chain is Cystatin-S (CST4), found in Homo sapiens (Human).